We begin with the raw amino-acid sequence, 96 residues long: Co-chaperonin GroES (96 aa).

This sequence belongs to the GroES chaperonin family. Heptamer of 7 subunits arranged in a ring. Interacts with the chaperonin GroEL.

The protein localises to the cytoplasm. Its function is as follows. Together with the chaperonin GroEL, plays an essential role in assisting protein folding. The GroEL-GroES system forms a nano-cage that allows encapsulation of the non-native substrate proteins and provides a physical environment optimized to promote and accelerate protein folding. GroES binds to the apical surface of the GroEL ring, thereby capping the opening of the GroEL channel. The sequence is that of Co-chaperonin GroES from Neisseria meningitidis serogroup A / serotype 4A (strain DSM 15465 / Z2491).